The primary structure comprises 216 residues: Phosphoribosylformylglycinamidine synthase subunit PurQ (216 aa).

One can recognise a Glutamine amidotransferase type-1 domain in the interval 2 to 216; that stretch reads SIGVIVFPGS…GRRMLEALLG (215 aa). The Nucleophile role is filled by cysteine 86. Active-site residues include histidine 193 and glutamate 195.

Part of the FGAM synthase complex composed of 1 PurL, 1 PurQ and 2 PurS subunits.

Its subcellular location is the cytoplasm. It carries out the reaction N(2)-formyl-N(1)-(5-phospho-beta-D-ribosyl)glycinamide + L-glutamine + ATP + H2O = 2-formamido-N(1)-(5-O-phospho-beta-D-ribosyl)acetamidine + L-glutamate + ADP + phosphate + H(+). The enzyme catalyses L-glutamine + H2O = L-glutamate + NH4(+). The protein operates within purine metabolism; IMP biosynthesis via de novo pathway; 5-amino-1-(5-phospho-D-ribosyl)imidazole from N(2)-formyl-N(1)-(5-phospho-D-ribosyl)glycinamide: step 1/2. Its function is as follows. Part of the phosphoribosylformylglycinamidine synthase complex involved in the purines biosynthetic pathway. Catalyzes the ATP-dependent conversion of formylglycinamide ribonucleotide (FGAR) and glutamine to yield formylglycinamidine ribonucleotide (FGAM) and glutamate. The FGAM synthase complex is composed of three subunits. PurQ produces an ammonia molecule by converting glutamine to glutamate. PurL transfers the ammonia molecule to FGAR to form FGAM in an ATP-dependent manner. PurS interacts with PurQ and PurL and is thought to assist in the transfer of the ammonia molecule from PurQ to PurL. This Synechococcus sp. (strain CC9605) protein is Phosphoribosylformylglycinamidine synthase subunit PurQ.